We begin with the raw amino-acid sequence, 241 residues long: HTH-type quorum-sensing regulator RhlR (241 aa).

The HTH luxR-type domain maps to 174–239; the sequence is LMSNPVCLSH…LAAAYAAALG (66 aa). Positions 198–217 form a DNA-binding region, H-T-H motif; it reads SGEIAIILSISESTVNFHHK.

Belongs to the autoinducer-regulated transcriptional regulatory protein family. In terms of assembly, homodimer in the absence of any acyl-L-homoserine lactone. The presence of the autoinducer C4-HSL has no significant effect on dimerization whereas N-(3-oxododecanoyl)-L-homoserine lactone (3O-C12-HSL), the LasR inducer, is able to dissociate the RhlR homodimers into monomers.

The protein resides in the cytoplasm. Its activity is regulated as follows. Activated by interaction with the autoinducer signal molecule N-butanoyl-L-homoserine lactone (C4-HSL or BHL), the product of the RhlI synthase. Is also activated by binding to rosmarinic acid (RA), a homoserine lactone mimic produced by plants, which induces a broad quorum sensing response, including the induction of all major quorum sensing controlled virulence factors. Rosmarinic acid secretion may be a plant defense mechanism to stimulate a premature quorum sensing response. In terms of biological role, quorum-sensing regulator that controls the expression of multiple virulence factors in response to extracellular signaling molecules called autoinducers. Involved, among others, in the transcriptional regulation of genes that are responsible for rhamnolipid surfactant biosynthesis. Acts by binding to a specific sequence in the rhlAB regulatory region, both in the presence and in the absence of its autoinducer. In the former case it activates transcription of the promoter, whereas in the latter it acts as a transcriptional repressor. Also regulates the expression of the rmlBDAC operon, encoding dTDP-L-rhamnose biosynthetic enzymes, by binding to the rml box in the promoter region. In addition, is involved in the regulation of the production of elastase (lasB) and pyocyanine. The chain is HTH-type quorum-sensing regulator RhlR from Pseudomonas aeruginosa (strain ATCC 15692 / DSM 22644 / CIP 104116 / JCM 14847 / LMG 12228 / 1C / PRS 101 / PAO1).